A 228-amino-acid chain; its full sequence is MEQEICVVSFSGGQDSTTLAVWAKKRFKKVYLVGFDYAQKHSVELECAQKIASLLQLPYEIISLDFLENITRSALFKNSNDLMGHSHVQNKDLPNSFVPNRNAIFITLLHSYAQKIGASNIALGVSQADFSGYPDCKEDFIKSIEHALNLGSNTAIKILTPLMFLNKAQEFQMAKDLGVLDLVIKETHTCYQGERKILHAYGYGCNECPACQLRKKGYEEFQTKVLFQ.

10 to 20 (FSGGQDSTTLA) lines the ATP pocket. 4 residues coordinate Zn(2+): Cys190, Cys205, Cys208, and Cys211.

It belongs to the QueC family. It depends on Zn(2+) as a cofactor.

It catalyses the reaction 7-carboxy-7-deazaguanine + NH4(+) + ATP = 7-cyano-7-deazaguanine + ADP + phosphate + H2O + H(+). The protein operates within purine metabolism; 7-cyano-7-deazaguanine biosynthesis. In terms of biological role, catalyzes the ATP-dependent conversion of 7-carboxy-7-deazaguanine (CDG) to 7-cyano-7-deazaguanine (preQ(0)). This is 7-cyano-7-deazaguanine synthase from Helicobacter pylori (strain HPAG1).